The chain runs to 389 residues: Large ribosomal subunit protein uL3 (389 aa).

It belongs to the universal ribosomal protein uL3 family.

The protein resides in the cytoplasm. The protein is Large ribosomal subunit protein uL3 (RPL3) of Debaryomyces hansenii (strain ATCC 36239 / CBS 767 / BCRC 21394 / JCM 1990 / NBRC 0083 / IGC 2968) (Yeast).